The following is a 229-amino-acid chain: Ras-related protein Rab-33B (229 aa).

The GTP site is built by Asn43, Val44, Gly45, Lys46, Thr47, Cys48, Thr62, and Thr65. Residue Thr47 coordinates Mg(2+). The Switch 1 motif lies at 56 to 68 (GRFPDRTEATIGV). Residues Thr65 and Asp88 each coordinate Mg(2+). The short motif at 89–108 (TAGQERFRKSMVQHYYRNVH) is the Switch 2 element. 6 residues coordinate GTP: Gly91, Asn148, Lys149, Asp151, Ala179, and Lys180. 2 S-geranylgeranyl cysteine lipidation sites follow: Cys227 and Cys229. Cys229 is subject to Cysteine methyl ester.

The protein belongs to the small GTPase superfamily. Rab family. Interacts (GTP- and GDP-bound forms) with ATG16L1; the complex consists of a tetramer where two RAB33B molecules bind independently one molecule of the ATG16L1 homodimer; the interaction promotes ATG12-ATG5-ATG16L1 complex recruitment to phagophores. Interacts with ATG16L2; however interaction is approximately hundred times lower than for ATG16L1. Interacts with RIC1 (via C-terminus domain); the interaction is direct with a preference for RAB33B-GTP. Interacts with RGP1. The cofactor is Mg(2+). Post-translationally, prenylated.

Its subcellular location is the golgi apparatus membrane. The protein localises to the golgi apparatus. The protein resides in the cis-Golgi network. It localises to the preautophagosomal structure membrane. The catalysed reaction is GTP + H2O = GDP + phosphate + H(+). Its activity is regulated as follows. Regulated by guanine nucleotide exchange factors (GEFs) which promote the exchange of bound GDP for free GTP. Regulated by GTPase activating proteins (GAPs) such as SGSM2 which increase the GTP hydrolysis activity. Inhibited by GDP dissociation inhibitors (GDIs). Functionally, the small GTPases Rab are key regulators of intracellular membrane trafficking, from the formation of transport vesicles to their fusion with membranes. Rabs cycle between an inactive GDP-bound form and an active GTP-bound form that is able to recruit to membranes different sets of downstream effectors directly responsible for vesicle formation, movement, tethering and fusion. RAB33B acts, in coordination with RAB6A, to regulate intra-Golgi retrograde trafficking. Participates in autophagosome formation by recruiting the ATG12-ATG5-ATG16L1 complex to phagophores, probably in a nucleotide-independent manner. This chain is Ras-related protein Rab-33B (RAB33B), found in Pongo abelii (Sumatran orangutan).